The following is a 440-amino-acid chain: DNA dC-&gt;dU-editing enzyme APOBEC-3 (440 aa).

CMP/dCMP-type deaminase domains follow at residues 49–165 (GRKD…AQVA) and 249–368 (EEEF…LCSL). Histidine 82 serves as a coordination point for Zn(2+). The active-site Proton donor is glutamate 84. Zn(2+) is bound by residues cysteine 116, cysteine 119, histidine 299, cysteine 327, and cysteine 330.

This sequence belongs to the cytidine and deoxycytidylate deaminase family. As to quaternary structure, homodimer. Interacts with mouse mammary tumor virus (MMTV) nucleocapsid protein p14. Requires Zn(2+) as cofactor. Expressed in spleen, node and lung.

The protein localises to the cytoplasm. It carries out the reaction a 2'-deoxycytidine in single-stranded DNA + H2O + H(+) = a 2'-deoxyuridine in single-stranded DNA + NH4(+). Functionally, DNA deaminase (cytidine deaminase) which acts as an inhibitor of retrovirus replication and retrotransposon mobility via deaminase-dependent and -independent mechanisms. Selectively targets single-stranded DNA and does not deaminate double-stranded DNA or single- or double-stranded RNA. Exhibits antiviral activity against HIV-1, simian immunodeficiency viruses (SIVs), mouse mammary tumor virus (MMTV) and friend murine leukemia virus (FrMLV) and may inhibit the mobility of LTR retrotransposons. The chain is DNA dC-&gt;dU-editing enzyme APOBEC-3 (Apobec3) from Mus musculus (Mouse).